Here is a 303-residue protein sequence, read N- to C-terminus: Putative band 7 family protein R614 (303 aa).

It belongs to the band 7/mec-2 family.

This chain is Putative band 7 family protein R614, found in Acanthamoeba polyphaga (Amoeba).